We begin with the raw amino-acid sequence, 198 residues long: HTH-type transcriptional regulator BetI (198 aa).

In terms of domain architecture, HTH tetR-type spans 8 to 68 (PLRRRELIDA…ATMRHLLREL (61 aa)). The segment at residues 31–50 (TVAQIAHEAGVSPALAHHYF) is a DNA-binding region (H-T-H motif).

The protein operates within amine and polyamine biosynthesis; betaine biosynthesis via choline pathway [regulation]. In terms of biological role, repressor involved in the biosynthesis of the osmoprotectant glycine betaine. It represses transcription of the choline transporter BetT and the genes of BetAB involved in the synthesis of glycine betaine. The polypeptide is HTH-type transcriptional regulator BetI (Brucella melitensis biotype 2 (strain ATCC 23457)).